The sequence spans 109 residues: Nucleoid-associated protein Sputw3181_1707 (109 aa).

This sequence belongs to the YbaB/EbfC family. In terms of assembly, homodimer.

The protein localises to the cytoplasm. The protein resides in the nucleoid. Its function is as follows. Binds to DNA and alters its conformation. May be involved in regulation of gene expression, nucleoid organization and DNA protection. In Shewanella sp. (strain W3-18-1), this protein is Nucleoid-associated protein Sputw3181_1707.